The sequence spans 317 residues: Cytochrome c biogenesis protein CcsA (317 aa).

The next 8 helical transmembrane spans lie at 9 to 29 (ILTH…LITF), 46 to 63 (TATA…WVYS), 71 to 91 (LYES…IFDF), 98 to 118 (LSAI…SGFL), 143 to 163 (MVLG…LLVI), 225 to 245 (IISL…VWAN), 258 to 273 (ETWA…IYLH), and 286 to 306 (AIVA…VNLL).

The protein belongs to the CcmF/CycK/Ccl1/NrfE/CcsA family. May interact with Ccs1.

The protein resides in the plastid. It localises to the chloroplast thylakoid membrane. Functionally, required during biogenesis of c-type cytochromes (cytochrome c6 and cytochrome f) at the step of heme attachment. In Citrus sinensis (Sweet orange), this protein is Cytochrome c biogenesis protein CcsA.